We begin with the raw amino-acid sequence, 333 residues long: Pantothenate synthetase (333 aa).

27-34 contacts ATP; that stretch reads MGALHEGH. The active-site Proton donor is His-34. Gln-61 contacts (R)-pantoate. Gln-61 provides a ligand contact to beta-alanine. Residue 148–151 coordinates ATP; it reads GQKD. Gln-154 lines the (R)-pantoate pocket. Residues Val-177 and 185–188 each bind ATP; that span reads LSSR.

Belongs to the pantothenate synthetase family. In terms of assembly, homodimer.

It is found in the cytoplasm. The catalysed reaction is (R)-pantoate + beta-alanine + ATP = (R)-pantothenate + AMP + diphosphate + H(+). Its pathway is cofactor biosynthesis; (R)-pantothenate biosynthesis; (R)-pantothenate from (R)-pantoate and beta-alanine: step 1/1. In terms of biological role, catalyzes the condensation of pantoate with beta-alanine in an ATP-dependent reaction via a pantoyl-adenylate intermediate. The sequence is that of Pantothenate synthetase from Streptomyces avermitilis (strain ATCC 31267 / DSM 46492 / JCM 5070 / NBRC 14893 / NCIMB 12804 / NRRL 8165 / MA-4680).